A 189-amino-acid polypeptide reads, in one-letter code: Elongation factor P (189 aa).

Belongs to the elongation factor P family.

The protein resides in the cytoplasm. Its pathway is protein biosynthesis; polypeptide chain elongation. In terms of biological role, involved in peptide bond synthesis. Stimulates efficient translation and peptide-bond synthesis on native or reconstituted 70S ribosomes in vitro. Probably functions indirectly by altering the affinity of the ribosome for aminoacyl-tRNA, thus increasing their reactivity as acceptors for peptidyl transferase. This Pseudomonas syringae pv. tomato (strain ATCC BAA-871 / DC3000) protein is Elongation factor P.